A 115-amino-acid chain; its full sequence is Viral Lymphotactin (115 aa).

The signal sequence occupies residues 1–19 (MRLLTILALCCVAIWVVES). A disulfide bridge connects residues Cys-30 and Cys-67.

It belongs to the intercrine gamma family. Interacts with host XCR1. In terms of processing, N-glycosylated and O-glycosylated.

The protein localises to the secreted. Chemoattractant for CD4-dendritic cells, but not for CD4+ dendritic cells, T-cells or B-cells. The sequence is that of Viral Lymphotactin (vXCL1) from Rat cytomegalovirus (isolate England) (RCMV-E).